We begin with the raw amino-acid sequence, 488 residues long: RuvB-like helicase 1 (488 aa).

Residues 1-11 (MATANTSSGSM) are compositionally biased toward polar residues. Residues 1–29 (MATANTSSGSMNGVGPVTMDSSTSGASRE) form a disordered region. An ATP-binding site is contributed by 87 to 94 (GGPGTGKT).

This sequence belongs to the RuvB family. In terms of assembly, may form heterododecamers with RVB2. Component of the SWR1 chromatin remodeling complex, the INO80 chromatin remodeling complex, and of the R2TP complex.

The protein resides in the nucleus. The enzyme catalyses ATP + H2O = ADP + phosphate + H(+). Functionally, DNA helicase which participates in several chromatin remodeling complexes, including the SWR1 and the INO80 complexes. The SWR1 complex mediates the ATP-dependent exchange of histone H2A for the H2A variant HZT1 leading to transcriptional regulation of selected genes by chromatin remodeling. The INO80 complex remodels chromatin by shifting nucleosomes and is involved in DNA repair. Also involved in pre-rRNA processing. The sequence is that of RuvB-like helicase 1 (RVB1) from Mycosarcoma maydis (Corn smut fungus).